We begin with the raw amino-acid sequence, 141 residues long: Large ribosomal subunit protein uL16 (141 aa).

The segment covering 1-21 has biased composition (basic residues); it reads MLMPKRTKFRKQMKGRNRGKS. Positions 1-22 are disordered; that stretch reads MLMPKRTKFRKQMKGRNRGKSF.

The protein belongs to the universal ribosomal protein uL16 family. Part of the 50S ribosomal subunit.

Functionally, binds 23S rRNA and is also seen to make contacts with the A and possibly P site tRNAs. The polypeptide is Large ribosomal subunit protein uL16 (Wolinella succinogenes (strain ATCC 29543 / DSM 1740 / CCUG 13145 / JCM 31913 / LMG 7466 / NCTC 11488 / FDC 602W) (Vibrio succinogenes)).